The primary structure comprises 134 residues: ATP synthase epsilon chain (134 aa).

This sequence belongs to the ATPase epsilon chain family. In terms of assembly, F-type ATPases have 2 components, CF(1) - the catalytic core - and CF(0) - the membrane proton channel. CF(1) has five subunits: alpha(3), beta(3), gamma(1), delta(1), epsilon(1). CF(0) has three main subunits: a, b and c.

Its subcellular location is the cell membrane. Functionally, produces ATP from ADP in the presence of a proton gradient across the membrane. In Alkaliphilus oremlandii (strain OhILAs) (Clostridium oremlandii (strain OhILAs)), this protein is ATP synthase epsilon chain.